Here is a 197-residue protein sequence, read N- to C-terminus: Phosphoheptose isomerase (197 aa).

One can recognise an SIS domain in the interval 37 to 197; that stretch reads MLQCLMNDGK…CIDSVLLEGM (161 aa). 52–54 is a binding site for substrate; that stretch reads NGG. Residues His61 and Glu65 each contribute to the Zn(2+) site. Residues Glu65, 94-95, 120-122, Ser125, and Gln175 contribute to the substrate site; these read ND and STS. Residues Gln175 and His183 each contribute to the Zn(2+) site.

Belongs to the SIS family. GmhA subfamily. In terms of assembly, homotetramer. The cofactor is Zn(2+).

The protein resides in the cytoplasm. The enzyme catalyses 2 D-sedoheptulose 7-phosphate = D-glycero-alpha-D-manno-heptose 7-phosphate + D-glycero-beta-D-manno-heptose 7-phosphate. It participates in carbohydrate biosynthesis; D-glycero-D-manno-heptose 7-phosphate biosynthesis; D-glycero-alpha-D-manno-heptose 7-phosphate and D-glycero-beta-D-manno-heptose 7-phosphate from sedoheptulose 7-phosphate: step 1/1. Its pathway is bacterial outer membrane biogenesis; LOS core biosynthesis. Catalyzes the isomerization of sedoheptulose 7-phosphate in D-glycero-D-manno-heptose 7-phosphate. The polypeptide is Phosphoheptose isomerase (Neisseria meningitidis serogroup A / serotype 4A (strain DSM 15465 / Z2491)).